The following is a 189-amino-acid chain: Protein GrpE (189 aa).

Residues 1–24 (MADEQTVDTQNPEANQAPEASGDD) are disordered.

Belongs to the GrpE family. As to quaternary structure, homodimer.

The protein resides in the cytoplasm. In terms of biological role, participates actively in the response to hyperosmotic and heat shock by preventing the aggregation of stress-denatured proteins, in association with DnaK and GrpE. It is the nucleotide exchange factor for DnaK and may function as a thermosensor. Unfolded proteins bind initially to DnaJ; upon interaction with the DnaJ-bound protein, DnaK hydrolyzes its bound ATP, resulting in the formation of a stable complex. GrpE releases ADP from DnaK; ATP binding to DnaK triggers the release of the substrate protein, thus completing the reaction cycle. Several rounds of ATP-dependent interactions between DnaJ, DnaK and GrpE are required for fully efficient folding. This Pseudomonas fluorescens (strain Pf0-1) protein is Protein GrpE.